A 139-amino-acid polypeptide reads, in one-letter code: Non-structural protein 1 (139 aa).

The DLNP; interaction with MAP1B motif lies at 136–139; sequence DLNP.

This sequence belongs to the pneumovirus non-structural protein 1 family. As to quaternary structure, monomer. Homomultimer. Heteromultimer with NS2. Interacts with the matrix protein M. Interacts with host ELOC and CUL2; this interaction allows NS1 to form an active E3 ligase with ELOC and CUL2. Interacts with host IRF3; this interaction leads to the disrupted association of IRF3 with CREBBP and thus reduced binding of IRF3 to the IFN-beta promoter. Interacts with host MAVS; this interaction prevents MAVS binding to RIGI and inhibits signaling pathway leading to interferon production. Interacts with host MAP1B/microtubule-associated protein 1B. Interacts with host TRIM25 (via SPRY domain); this interaction suppresses RIGI ubiquitination and results in decreased interaction between RIGI and MAVS.

It localises to the host cytoplasm. The protein localises to the host mitochondrion. The protein resides in the host nucleus. Its function is as follows. Plays a major role in antagonizing the type I IFN-mediated antiviral response by degrading or inhibiting multiple cellular factors required for either IFN induction or response pathways. Acts cooperatively with NS2 to repress activation and nuclear translocation of host IFN-regulatory factor IRF3. Also disrupts the association of IRF3 with CREBBP. Interacts with host mitochondrial-associated membrane (MAM) MAVS and prevents the interaction with RIGI. Interacts with TRIM25 to suppress TRIM25-mediated RIGI ubiquitination and thereby RIGI-MAVS interaction. Together with NS2, participates in the proteasomal degradation of host STAT2, IRF3, IRF7, TBK1 and RIGI through a NS-degradasome involving CUL2 and Elongin-C. The degradasome requires an intact mitochondrial MAVS. Decreases the levels of host TRAF3 and IKBKE/IKK-epsilon. As functions other than disruptions of the type I IFN-mediated antiviral signaling pathways, induces host SOCS1 and SOCS3 expression. Suppresses premature apoptosis by an NF-kappa-B-dependent, interferon-independent mechanism and thus facilitates virus growth. Additionally, NS1 may serve some inhibitory role in viral transcription and RNA replication. Suppresses proliferation and activation of host CD103+ CD8+ cytotoxic T-lymphocytes and Th17 helper T-lymphocytes. The sequence is that of Non-structural protein 1 (1C) from Homo sapiens (Human).